We begin with the raw amino-acid sequence, 247 residues long: Uridylate kinase (247 aa).

Residue 18-21 participates in ATP binding; the sequence is KLSG. Residue G60 coordinates UMP. ATP is bound by residues G61 and R65. UMP-binding positions include D80 and 141 to 148; that span reads TGNPFFTT. ATP is bound by residues T168, Y174, and D177.

Belongs to the UMP kinase family. As to quaternary structure, homohexamer.

The protein localises to the cytoplasm. It carries out the reaction UMP + ATP = UDP + ADP. It participates in pyrimidine metabolism; CTP biosynthesis via de novo pathway; UDP from UMP (UMPK route): step 1/1. With respect to regulation, inhibited by UTP. In terms of biological role, catalyzes the reversible phosphorylation of UMP to UDP. This Pseudomonas putida (strain ATCC 47054 / DSM 6125 / CFBP 8728 / NCIMB 11950 / KT2440) protein is Uridylate kinase.